A 33-amino-acid chain; its full sequence is Photosystem II reaction center protein Psb30 (33 aa).

A helical transmembrane segment spans residues 5-25 (IVFQLTALLFVVAAGPLVIVL).

Belongs to the Psb30/Ycf12 family. In terms of assembly, PSII is composed of 1 copy each of membrane proteins PsbA, PsbB, PsbC, PsbD, PsbE, PsbF, PsbH, PsbI, PsbJ, PsbK, PsbL, PsbM, PsbT, PsbX, PsbY, PsbZ, Psb30/Ycf12, peripheral proteins of the oxygen-evolving complex and a large number of cofactors. It forms dimeric complexes.

Its subcellular location is the plastid. It is found in the chloroplast thylakoid membrane. Its function is as follows. A core subunit of photosystem II (PSII), probably helps stabilize the reaction center. In Chlorella vulgaris (Green alga), this protein is Photosystem II reaction center protein Psb30.